A 64-amino-acid chain; its full sequence is Large ribosomal subunit protein eL24 (64 aa).

Zn(2+)-binding residues include cysteine 6, cysteine 9, cysteine 32, and cysteine 36. The segment at 6–36 (CNFCGKSIEPGTGKKFVKKDGSVMFICSSKC) adopts a C4-type zinc-finger fold.

Belongs to the eukaryotic ribosomal protein eL24 family. Part of the 50S ribosomal subunit. Forms a cluster with proteins L3 and L14. Requires Zn(2+) as cofactor.

In terms of biological role, binds to the 23S rRNA. This chain is Large ribosomal subunit protein eL24, found in Methanococcus aeolicus (strain ATCC BAA-1280 / DSM 17508 / OCM 812 / Nankai-3).